The chain runs to 110 residues: Single-stranded DNA-binding protein 1 (110 aa).

Residues 1 to 104 enclose the SSB domain; sequence MNKILLIGRM…VVGEEVQFLE (104 aa).

As to quaternary structure, homotetramer.

This Clostridium acetobutylicum (strain ATCC 824 / DSM 792 / JCM 1419 / IAM 19013 / LMG 5710 / NBRC 13948 / NRRL B-527 / VKM B-1787 / 2291 / W) protein is Single-stranded DNA-binding protein 1 (ssb1).